A 395-amino-acid chain; its full sequence is NKAP-like protein (395 aa).

Disordered stretches follow at residues Met1–Pro77 and Cys91–Lys247. Ser23 and Ser25 each carry phosphoserine. Polar residues predominate over residues Ser25 to Ser35. A compositionally biased stretch (basic and acidic residues) spans Asp109–Gly130. Phosphoserine is present on Ser149. Residues Asp150–Asn161 show a composition bias toward basic and acidic residues. Basic residues-rich tracts occupy residues Lys177–Lys197 and Lys214–Lys238.

It belongs to the NKAP family. As to quaternary structure, interacts with RBPJ, CIR1 and HDAC3. Specific to testis (at protein level). Detected in differenting spermatogonia and early spermatocytes (at protein level).

It localises to the nucleus. In terms of biological role, transcriptional repressor of Notch-mediated signaling. Required for spermatogenesis. This is NKAP-like protein from Mus musculus (Mouse).